Reading from the N-terminus, the 407-residue chain is TOM1-like protein 1 (407 aa).

Gly2 carries the N-acetylglycine modification. A VHS domain is found at 55-183 (ATTENLEEPD…SLKARGIRFP (129 aa)). Residues 228-315 (FTAEQTKEAF…TLSKYEEMNK (88 aa)) form the GAT domain. Residues 315-407 (KPSAPLTSHE…SSKNDDLIRF (93 aa)) form a disordered region. Ser337 is subject to Phosphoserine. Positions 337–347 (SPIHGREESLV) are enriched in basic and acidic residues. Gly residues predominate over residues 353-364 (VRGGFHGGGGSG). A compositionally biased stretch (basic and acidic residues) spans 388-407 (PDHDPKKEQSSSKNDDLIRF).

This sequence belongs to the TOM1 family. Ubiquitously expressed.

The protein resides in the membrane. Might contribute to the loading of the ESCRT machinery. This chain is TOM1-like protein 1, found in Arabidopsis thaliana (Mouse-ear cress).